A 677-amino-acid polypeptide reads, in one-letter code: Methionine--tRNA ligase (677 aa).

Residues 15-25 carry the 'HIGH' region motif; it reads PYANGSIHLGH. Zn(2+) is bound by residues Cys-146, Cys-149, Cys-159, and Cys-162. A 'KMSKS' region motif is present at residues 333-337; sequence KMSKS. ATP is bound at residue Lys-336. The tRNA-binding domain maps to 575 to 677; the sequence is DFAKIDLRVA…SGAKPGQQVK (103 aa).

Belongs to the class-I aminoacyl-tRNA synthetase family. MetG type 1 subfamily. Homodimer. It depends on Zn(2+) as a cofactor.

Its subcellular location is the cytoplasm. It carries out the reaction tRNA(Met) + L-methionine + ATP = L-methionyl-tRNA(Met) + AMP + diphosphate. Is required not only for elongation of protein synthesis but also for the initiation of all mRNA translation through initiator tRNA(fMet) aminoacylation. In Cronobacter sakazakii (strain ATCC BAA-894) (Enterobacter sakazakii), this protein is Methionine--tRNA ligase.